Consider the following 276-residue polypeptide: AT-hook motif nuclear-localized protein 17 (276 aa).

Over residues 1-10 the composition is skewed to basic and acidic residues; it reads MKGEYREQKS. 2 disordered regions span residues 1–80 and 212–248; these read MKGE…RDTD and AEEE…SGGE. Low complexity-rich tracts occupy residues 20 to 31 and 40 to 49; these read HQQQQQQQQQQH and SSTVTPTVDD. Positions 56 to 68 form a DNA-binding region, a.T hook; it reads RRPRGRPPGSKNK. Residues 80–230 form the PPC domain; the sequence is DPPMSPYILE…GTGEREGQSP (151 aa). The span at 212–227 shows a compositional bias: basic and acidic residues; sequence AEEEQKHSAGTGEREG. Positions 233–248 are enriched in gly residues; sequence SGGGEESGQMAGSGGE.

The protein localises to the nucleus. Its function is as follows. Transcription factor that specifically binds AT-rich DNA sequences related to the nuclear matrix attachment regions (MARs). This Arabidopsis thaliana (Mouse-ear cress) protein is AT-hook motif nuclear-localized protein 17.